Reading from the N-terminus, the 207-residue chain is dITP/XTP pyrophosphatase (207 aa).

Position 16-21 (16-21 (SNNKGK)) interacts with substrate. The active-site Proton acceptor is aspartate 79. Residue aspartate 79 participates in Mg(2+) binding. Substrate is bound by residues serine 80, 166–169 (FGYD), lysine 189, and 194–195 (HR).

The protein belongs to the HAM1 NTPase family. In terms of assembly, homodimer. Requires Mg(2+) as cofactor.

The enzyme catalyses XTP + H2O = XMP + diphosphate + H(+). It carries out the reaction dITP + H2O = dIMP + diphosphate + H(+). It catalyses the reaction ITP + H2O = IMP + diphosphate + H(+). In terms of biological role, pyrophosphatase that catalyzes the hydrolysis of nucleoside triphosphates to their monophosphate derivatives, with a high preference for the non-canonical purine nucleotides XTP (xanthosine triphosphate), dITP (deoxyinosine triphosphate) and ITP. Seems to function as a house-cleaning enzyme that removes non-canonical purine nucleotides from the nucleotide pool, thus preventing their incorporation into DNA/RNA and avoiding chromosomal lesions. This is dITP/XTP pyrophosphatase from Acinetobacter baumannii (strain ATCC 17978 / DSM 105126 / CIP 53.77 / LMG 1025 / NCDC KC755 / 5377).